The following is a 74-amino-acid chain: Small integral membrane protein 15 (74 aa).

A helical transmembrane segment spans residues 20–40 (YGFLTTVILALTPLFLASAVL). Residues 42–74 (WKLAKMIEAREKEQKKKQKRQENIAKAKRLKKD) are a coiled coil. The span at 55–66 (QKKKQKRQENIA) shows a compositional bias: basic and acidic residues. A disordered region spans residues 55–74 (QKKKQKRQENIAKAKRLKKD).

It belongs to the SMIM15 family.

It localises to the membrane. This is Small integral membrane protein 15 (SMIM15) from Homo sapiens (Human).